Consider the following 135-residue polypeptide: Large ribosomal subunit protein uL16c (135 aa).

This sequence belongs to the universal ribosomal protein uL16 family. As to quaternary structure, part of the 50S ribosomal subunit.

It is found in the plastid. It localises to the chloroplast. This is Large ribosomal subunit protein uL16c from Lactuca sativa (Garden lettuce).